A 1007-amino-acid chain; its full sequence is Calmodulin-binding transcription activator 1 (1007 aa).

Positions Met18–Ser144 form a DNA-binding region, CG-1. Residues Lys148–Asp164 show a composition bias toward polar residues. The disordered stretch occupies residues Lys148–Asp227. A compositionally biased stretch (low complexity) spans Ser165–Leu176. Residues Gly183–Asn202 are compositionally biased toward polar residues. The transcription activation stretch occupies residues Asp233–Gly398. ANK repeat units lie at residues Asp612–Phe641 and Asn645–Ala674. 2 IQ domains span residues Leu821–Lys850 and Ile844–Leu873. Positions Trp869–Phe891 are calmodulin-binding. The stretch at Gln915 to Met943 forms a coiled coil. The residue at position 942 (Ser942) is a Phosphoserine.

Belongs to the CAMTA family. In terms of tissue distribution, expressed in roots, stems, leaves, pollen and siliques.

It localises to the nucleus. Its function is as follows. Transcription activator that binds calmodulin in a calcium-dependent manner in vitro. Binds to the DNA consensus sequence 5'-[ACG]CGCG[GTC]-3'. Regulates transcriptional activity in response to calcium signals. Involved in freezing tolerance. Involved in freezing tolerance in association with CAMTA2 and CAMTA3. Contributes together with CAMTA2 and CAMTA3 to the positive regulation of the cold-induced expression of DREB1A/CBF3, DREB1B/CBF1 and DREB1C/CBF2. Involved in drought stress responses by regulating several drought-responsive genes. Involved in auxin signaling and responses to abiotic stresses. Activates the expression of the V-PPase proton pump AVP1 in pollen. The chain is Calmodulin-binding transcription activator 1 from Arabidopsis thaliana (Mouse-ear cress).